The chain runs to 556 residues: 2-succinyl-5-enolpyruvyl-6-hydroxy-3-cyclohexene-1-carboxylate synthase (556 aa).

This sequence belongs to the TPP enzyme family. MenD subfamily. As to quaternary structure, homodimer. It depends on Mg(2+) as a cofactor. Mn(2+) serves as cofactor. The cofactor is thiamine diphosphate.

It carries out the reaction isochorismate + 2-oxoglutarate + H(+) = 5-enolpyruvoyl-6-hydroxy-2-succinyl-cyclohex-3-ene-1-carboxylate + CO2. The protein operates within quinol/quinone metabolism; 1,4-dihydroxy-2-naphthoate biosynthesis; 1,4-dihydroxy-2-naphthoate from chorismate: step 2/7. Its pathway is quinol/quinone metabolism; menaquinone biosynthesis. Its function is as follows. Catalyzes the thiamine diphosphate-dependent decarboxylation of 2-oxoglutarate and the subsequent addition of the resulting succinic semialdehyde-thiamine pyrophosphate anion to isochorismate to yield 2-succinyl-5-enolpyruvyl-6-hydroxy-3-cyclohexene-1-carboxylate (SEPHCHC). This is 2-succinyl-5-enolpyruvyl-6-hydroxy-3-cyclohexene-1-carboxylate synthase from Staphylococcus epidermidis (strain ATCC 35984 / DSM 28319 / BCRC 17069 / CCUG 31568 / BM 3577 / RP62A).